Consider the following 387-residue polypeptide: Probable protein phosphatase 2C 25 (387 aa).

Residues Glu-52–Ile-351 enclose the PPM-type phosphatase domain. Residues Asp-83, Gly-84, Asp-283, and Asp-342 each coordinate Mn(2+).

The protein belongs to the PP2C family. Requires Mg(2+) as cofactor. It depends on Mn(2+) as a cofactor.

The enzyme catalyses O-phospho-L-seryl-[protein] + H2O = L-seryl-[protein] + phosphate. It catalyses the reaction O-phospho-L-threonyl-[protein] + H2O = L-threonyl-[protein] + phosphate. This is Probable protein phosphatase 2C 25 from Oryza sativa subsp. japonica (Rice).